Consider the following 262-residue polypeptide: MSTHSNHPFHLVDYSPWPLTGAIGAMTTVSGMVKWFHQYDISLFLLGNIITILTVYQWWRDVSREGTYQGLHTYAVTIGLRWGMILFILSEVLFFVSFFWAFFHSSLSPAIELGASWPPMGIISFNPFQIPLLNTAILLASGVTVTWAHHSLMESNHSQTTQGLFFTVLLGIYFTILQAYEYIEAPFTIADSVYGSTFYMATGFHGVHVLIGTTFLLVCLLRHLNNHFSKNHHFGFEAAAWYWHFVDVVWLFLYITIYWWGG.

The next 6 helical transmembrane spans lie at 39–59 (YDIS…YQWW), 83–103 (GMIL…WAFF), 120–140 (MGII…ILLA), 163–183 (GLFF…YEYI), 201–221 (ATGF…VCLL), and 240–260 (AWYW…IYWW).

It belongs to the cytochrome c oxidase subunit 3 family. Component of the cytochrome c oxidase (complex IV, CIV), a multisubunit enzyme composed of a catalytic core of 3 subunits and several supernumerary subunits. The complex exists as a monomer or a dimer and forms supercomplexes (SCs) in the inner mitochondrial membrane with ubiquinol-cytochrome c oxidoreductase (cytochrome b-c1 complex, complex III, CIII).

The protein localises to the mitochondrion inner membrane. It catalyses the reaction 4 Fe(II)-[cytochrome c] + O2 + 8 H(+)(in) = 4 Fe(III)-[cytochrome c] + 2 H2O + 4 H(+)(out). Component of the cytochrome c oxidase, the last enzyme in the mitochondrial electron transport chain which drives oxidative phosphorylation. The respiratory chain contains 3 multisubunit complexes succinate dehydrogenase (complex II, CII), ubiquinol-cytochrome c oxidoreductase (cytochrome b-c1 complex, complex III, CIII) and cytochrome c oxidase (complex IV, CIV), that cooperate to transfer electrons derived from NADH and succinate to molecular oxygen, creating an electrochemical gradient over the inner membrane that drives transmembrane transport and the ATP synthase. Cytochrome c oxidase is the component of the respiratory chain that catalyzes the reduction of oxygen to water. Electrons originating from reduced cytochrome c in the intermembrane space (IMS) are transferred via the dinuclear copper A center (CU(A)) of subunit 2 and heme A of subunit 1 to the active site in subunit 1, a binuclear center (BNC) formed by heme A3 and copper B (CU(B)). The BNC reduces molecular oxygen to 2 water molecules using 4 electrons from cytochrome c in the IMS and 4 protons from the mitochondrial matrix. This Drosophila yakuba (Fruit fly) protein is Cytochrome c oxidase subunit 3 (mt:CoIII).